Consider the following 473-residue polypeptide: GTPase Der (473 aa).

2 EngA-type G domains span residues 3-166 (PVIA…ENPE) and 177-350 (IRIG…ESAM). Residues 9–16 (GRPNVGKS), 56–60 (DTGGL), 118–121 (NKTD), 183–190 (GRPNVGKS), 230–234 (DTAGV), and 295–298 (NKWD) contribute to the GTP site. One can recognise a KH-like domain in the interval 351-435 (SKWPTNRLTA…PIRFEFKSGE (85 aa)). Positions 444–458 (RLTPRQKVKKDNDLK) are enriched in basic and acidic residues. The segment at 444 to 473 (RLTPRQKVKKDNDLKKGRRIKKTRQKSVKR) is disordered. Basic residues predominate over residues 459-473 (KGRRIKKTRQKSVKR).

This sequence belongs to the TRAFAC class TrmE-Era-EngA-EngB-Septin-like GTPase superfamily. EngA (Der) GTPase family. Associates with the 50S ribosomal subunit.

Its function is as follows. GTPase that plays an essential role in the late steps of ribosome biogenesis. This chain is GTPase Der, found in Marinobacter nauticus (strain ATCC 700491 / DSM 11845 / VT8) (Marinobacter aquaeolei).